Consider the following 199-residue polypeptide: Translation initiation factor IF-3 (199 aa).

This sequence belongs to the IF-3 family. Monomer.

The protein localises to the cytoplasm. Its function is as follows. IF-3 binds to the 30S ribosomal subunit and shifts the equilibrium between 70S ribosomes and their 50S and 30S subunits in favor of the free subunits, thus enhancing the availability of 30S subunits on which protein synthesis initiation begins. The polypeptide is Translation initiation factor IF-3 (Mycoplasmopsis pulmonis (strain UAB CTIP) (Mycoplasma pulmonis)).